A 101-amino-acid chain; its full sequence is uncharacterized protein (101 aa).

The chain crosses the membrane as a helical span at residues Val17–Phe37.

The protein resides in the endoplasmic reticulum membrane. This is an uncharacterized protein from Schizosaccharomyces pombe (strain 972 / ATCC 24843) (Fission yeast).